A 496-amino-acid polypeptide reads, in one-letter code: Transmembrane protein 104 (496 aa).

The Cytoplasmic segment spans residues 1–10; sequence MAGEITETGE. Residues 11-31 traverse the membrane as a helical segment; sequence LYSPYVGLVYMFNLIVGTGAL. At 32–36 the chain is on the extracellular side; sequence TMPKA. The chain crosses the membrane as a helical span at residues 37–57; the sequence is FATAGWLVSLVLLVFVGFMSF. The Cytoplasmic portion of the chain corresponds to 58-146; that stretch reads VTTTFAMEAM…SMFFNKVGVN (89 aa). Positions 81 to 100 are disordered; the sequence is THKEEDDEDSSTASDSDLLS. The segment covering 91 to 100 has biased composition (low complexity); sequence STASDSDLLS. Residues 147–167 form a helical membrane-spanning segment; sequence LFYFCIITYLYGDLAIYAAAV. Residues 168-204 are Extracellular-facing; the sequence is PVSLMQVTCSVSGNDSCGVDTDARYNDTDLCWGPLRR. Asn193 carries N-linked (GlcNAc...) asparagine glycosylation. The helical transmembrane segment at 205-225 threads the bilayer; it reads VDVYRIYLAIFTVLLGPFTFF. Residues 226–233 lie on the Cytoplasmic side of the membrane; the sequence is DVQKTKYL. The chain crosses the membrane as a helical span at residues 234–254; the sequence is QILTSMMRWIAFAIMIVLALV. The Extracellular portion of the chain corresponds to 255-265; the sequence is RIGKGQGEGHP. Residues 266 to 286 form a helical membrane-spanning segment; the sequence is PLANFLGVQNLFGVCVYSFMC. Residues 287-306 lie on the Cytoplasmic side of the membrane; it reads QHSLPSLITPISSKRHITRL. A helical transmembrane segment spans residues 307–327; that stretch reads LFLDYALILAFYGLLSFTAIF. The Extracellular segment spans residues 328-354; the sequence is CFRGDSLMDMYTLNFARCDVVGLAAVR. The chain crosses the membrane as a helical span at residues 355–375; that stretch reads FFLGLFPVFTISTNFPIIAVT. Over 376–397 the chain is Cytoplasmic; that stretch reads LRNNWKTLFHREGGTYPWVVDR. Residues 398–418 form a helical membrane-spanning segment; it reads VVFPTITLVPPILVAFCTHDL. The Extracellular portion of the chain corresponds to 419–421; it reads ESL. The helical transmembrane segment at 422–442 threads the bilayer; sequence VAITGAYAGTGIQYVIPAFLV. Residues 443-470 lie on the Cytoplasmic side of the membrane; the sequence is YLCRKDTQLTFGYGTVNKHRSPFRHTFW. Residues 471-491 traverse the membrane as a helical segment; sequence VAFVLLWAFSCFFFVTAYIVL. Over 492-496 the chain is Extracellular; sequence KETQL.

The protein belongs to the TMEM104 family.

The protein localises to the membrane. The sequence is that of Transmembrane protein 104 (Tmem104) from Mus musculus (Mouse).